The following is a 297-amino-acid chain: Cytidine deaminase (297 aa).

CMP/dCMP-type deaminase domains are found at residues serine 50 to lysine 170 and glutamate 189 to leucine 297. Asparagine 91–glutamate 93 serves as a coordination point for substrate. Histidine 104 is a Zn(2+) binding site. The Proton donor role is filled by glutamate 106. The Zn(2+) site is built by cysteine 131 and cysteine 134.

This sequence belongs to the cytidine and deoxycytidylate deaminase family. Homodimer. The cofactor is Zn(2+).

It catalyses the reaction cytidine + H2O + H(+) = uridine + NH4(+). The enzyme catalyses 2'-deoxycytidine + H2O + H(+) = 2'-deoxyuridine + NH4(+). In terms of biological role, this enzyme scavenges exogenous and endogenous cytidine and 2'-deoxycytidine for UMP synthesis. This is Cytidine deaminase from Aliivibrio fischeri (strain ATCC 700601 / ES114) (Vibrio fischeri).